Consider the following 356-residue polypeptide: Pyruvate dehydrogenase E1 component subunit beta, mitochondrial (356 aa).

Residues 1–25 (MLSSILKKIQPSLLVNFRIITRTYA) constitute a mitochondrion transit peptide. Glu-85 provides a ligand contact to thiamine diphosphate. K(+)-binding residues include Ile-138, Ala-186, Ile-187, Asp-189, and Asn-191.

As to quaternary structure, tetramer of 2 alpha and 2 beta subunits. It depends on thiamine diphosphate as a cofactor.

It localises to the mitochondrion matrix. It carries out the reaction N(6)-[(R)-lipoyl]-L-lysyl-[protein] + pyruvate + H(+) = N(6)-[(R)-S(8)-acetyldihydrolipoyl]-L-lysyl-[protein] + CO2. Functionally, the pyruvate dehydrogenase complex catalyzes the overall conversion of pyruvate to acetyl-CoA and CO(2). It contains multiple copies of three enzymatic components: pyruvate dehydrogenase (E1), dihydrolipoamide acetyltransferase (E2) and lipoamide dehydrogenase (E3). This chain is Pyruvate dehydrogenase E1 component subunit beta, mitochondrial (pdhB), found in Dictyostelium discoideum (Social amoeba).